We begin with the raw amino-acid sequence, 169 residues long: Crossover junction endodeoxyribonuclease RuvC (169 aa).

Catalysis depends on residues Asp13, Glu73, and Asp145. 3 residues coordinate Mg(2+): Asp13, Glu73, and Asp145.

Belongs to the RuvC family. As to quaternary structure, homodimer which binds Holliday junction (HJ) DNA. The HJ becomes 2-fold symmetrical on binding to RuvC with unstacked arms; it has a different conformation from HJ DNA in complex with RuvA. In the full resolvosome a probable DNA-RuvA(4)-RuvB(12)-RuvC(2) complex forms which resolves the HJ. The cofactor is Mg(2+).

Its subcellular location is the cytoplasm. The catalysed reaction is Endonucleolytic cleavage at a junction such as a reciprocal single-stranded crossover between two homologous DNA duplexes (Holliday junction).. Its function is as follows. The RuvA-RuvB-RuvC complex processes Holliday junction (HJ) DNA during genetic recombination and DNA repair. Endonuclease that resolves HJ intermediates. Cleaves cruciform DNA by making single-stranded nicks across the HJ at symmetrical positions within the homologous arms, yielding a 5'-phosphate and a 3'-hydroxyl group; requires a central core of homology in the junction. The consensus cleavage sequence is 5'-(A/T)TT(C/G)-3'. Cleavage occurs on the 3'-side of the TT dinucleotide at the point of strand exchange. HJ branch migration catalyzed by RuvA-RuvB allows RuvC to scan DNA until it finds its consensus sequence, where it cleaves and resolves the cruciform DNA. This Solidesulfovibrio magneticus (strain ATCC 700980 / DSM 13731 / RS-1) (Desulfovibrio magneticus) protein is Crossover junction endodeoxyribonuclease RuvC.